The primary structure comprises 393 residues: Staphopain B (393 aa).

The first 36 residues, 1 to 36 (MNSSCKTRVFNIISIIMVSMLILSLGAFANNNKAKA), serve as a signal peptide directing secretion. Positions 37–219 (DSHSKQLEIN…KVEENEAIQE (183 aa)) are excised as a propeptide. Residues C243, H340, and N360 contribute to the active site.

It belongs to the peptidase C47 family. In the cytoplasm, prematurely activated/folded SspB forms a stable non-covalent complex with SspC. Proteolytically cleaved by staphylococcal serine protease (SspA).

It localises to the secreted. With respect to regulation, prematurely activated/folded staphopain B is inhibited by staphostatin B (SspC), which is probably required to protect staphylococcal cytoplasmic proteins from degradation by SspB. Functionally, cysteine protease that plays an important role in the inhibition of host innate immune response. Degrades host elastin, fibrogen, fibronectin and kininogen. Blocks phagocytosis of opsonised S.aureus by neutrophils and monocytes by inducing their death in a proteolytic activity-dependent manner. Decreases surface expression of the 'don't eat me' signal CD31 on neutrophils. Cleaves host galectin-3/LGALS3, thereby inhibiting the neutrophil-activating ability of the lectin. In Staphylococcus aureus (strain MRSA252), this protein is Staphopain B (sspB).